The sequence spans 54 residues: Conotoxin Cal6.17 (54 aa).

The N-terminal stretch at 1-19 (MSGTGVLLLTLLLLVTMAT) is a signal peptide. 3 cysteine pairs are disulfide-bonded: cysteine 24–cysteine 39, cysteine 32–cysteine 49, and cysteine 38–cysteine 53.

Expressed by the venom duct.

Its subcellular location is the secreted. Functionally, probable neurotoxin. The chain is Conotoxin Cal6.17 from Californiconus californicus (California cone).